A 452-amino-acid polypeptide reads, in one-letter code: MTARNSLTIVLAAGEGTRMRSSLPKVLNPVAGRSLLAHVLSAAPHGERDRLAVVIGPDHQAVGDEAKRVRSDAAIHIQAQRLGTAHAVLAAREAIAQGADDLLIAFGDTPLISAETFARLREPLHDGSSLVVLGFRAADPTGYGRLVVQDGKLTAIREQADASADELKITLCNAGVMAIDGKIALDVLDKIGNANAKGEYYLTDAVGIVRDLGLTASVIETSEDEVRGINTKAQLAEAETVMQTRLRLAAMAAGVTLIAPETVYLAADTTFGKDVVIEPFVVIGPGVSIADGAVIHSFSHLTEAKIGSKAQVGPYARLRPGTSLGDGAKIGNFVETKAAQIDAGAKVNHLTYIGDAHIGASANIGAGTITCNYDGFDKHKTEIGAGAFIGSNSSLVAPVKIGTGAYVGSGSVITKDVPDGALAVERNVQTAKDGWAKRFRDAKSRHRKPKAH.

The interval 1–232 (MTARNSLTIV…EDEVRGINTK (232 aa)) is pyrophosphorylase. UDP-N-acetyl-alpha-D-glucosamine is bound by residues 11–14 (LAAG), Lys25, Gln78, and 83–84 (GT). Asp108 lines the Mg(2+) pocket. UDP-N-acetyl-alpha-D-glucosamine contacts are provided by Gly144, Glu158, Asn173, and Asn230. Asn230 is a binding site for Mg(2+). The tract at residues 233 to 253 (AQLAEAETVMQTRLRLAAMAA) is linker. Residues 254–452 (GVTLIAPETV…KSRHRKPKAH (199 aa)) form an N-acetyltransferase region. Residues Arg319 and Lys337 each contribute to the UDP-N-acetyl-alpha-D-glucosamine site. Residue His349 is the Proton acceptor of the active site. UDP-N-acetyl-alpha-D-glucosamine is bound by residues Tyr352 and Asn363. Acetyl-CoA-binding positions include Ala366, 372-373 (NY), Ser391, Ser409, and Arg426.

In the N-terminal section; belongs to the N-acetylglucosamine-1-phosphate uridyltransferase family. It in the C-terminal section; belongs to the transferase hexapeptide repeat family. As to quaternary structure, homotrimer. It depends on Mg(2+) as a cofactor.

The protein resides in the cytoplasm. It carries out the reaction alpha-D-glucosamine 1-phosphate + acetyl-CoA = N-acetyl-alpha-D-glucosamine 1-phosphate + CoA + H(+). The catalysed reaction is N-acetyl-alpha-D-glucosamine 1-phosphate + UTP + H(+) = UDP-N-acetyl-alpha-D-glucosamine + diphosphate. Its pathway is nucleotide-sugar biosynthesis; UDP-N-acetyl-alpha-D-glucosamine biosynthesis; N-acetyl-alpha-D-glucosamine 1-phosphate from alpha-D-glucosamine 6-phosphate (route II): step 2/2. It participates in nucleotide-sugar biosynthesis; UDP-N-acetyl-alpha-D-glucosamine biosynthesis; UDP-N-acetyl-alpha-D-glucosamine from N-acetyl-alpha-D-glucosamine 1-phosphate: step 1/1. It functions in the pathway bacterial outer membrane biogenesis; LPS lipid A biosynthesis. In terms of biological role, catalyzes the last two sequential reactions in the de novo biosynthetic pathway for UDP-N-acetylglucosamine (UDP-GlcNAc). The C-terminal domain catalyzes the transfer of acetyl group from acetyl coenzyme A to glucosamine-1-phosphate (GlcN-1-P) to produce N-acetylglucosamine-1-phosphate (GlcNAc-1-P), which is converted into UDP-GlcNAc by the transfer of uridine 5-monophosphate (from uridine 5-triphosphate), a reaction catalyzed by the N-terminal domain. The polypeptide is Bifunctional protein GlmU (Rhodopseudomonas palustris (strain ATCC BAA-98 / CGA009)).